We begin with the raw amino-acid sequence, 239 residues long: Large ribosomal subunit protein uL3 (239 aa).

Disordered regions lie at residues 140-164 (SHRS…KMPG) and 211-239 (PLPK…QEGA). The residue at position 151 (Gln151) is an N5-methylglutamine.

It belongs to the universal ribosomal protein uL3 family. As to quaternary structure, part of the 50S ribosomal subunit. Forms a cluster with proteins L14 and L19. In terms of processing, methylated by PrmB.

Its function is as follows. One of the primary rRNA binding proteins, it binds directly near the 3'-end of the 23S rRNA, where it nucleates assembly of the 50S subunit. In Bradyrhizobium sp. (strain ORS 278), this protein is Large ribosomal subunit protein uL3.